The sequence spans 135 residues: U-myrmeciitoxin(01)-Mg7a (135 aa).

The signal sequence occupies residues 1 to 21; sequence MKLSCLSLALAIILLLAIVHS. The propeptide occupies 22–72; the sequence is PNMEVKALAGPEADAIGFADAFGEADAFGEADAFGEADAFGEADAFGEADA. The tract at residues 69–95 is disordered; that stretch reads EADAKRSKSSSKTKPKKPKKPKKKIKI. Over residues 75–93 the composition is skewed to basic residues; that stretch reads SKSSSKTKPKKPKKPKKKI. Residue Ser-120 is glycosylated (O-linked (GalNAc...) serine). O-linked (GalNAc...) threonine glycans are attached at residues Thr-129 and Thr-130.

It belongs to the formicidae venom precursor-01 superfamily. Glycosylation is critical to maintaining the aqueous solubility of this protein, but does not directly contribute to its activity. As to expression, expressed by the venom gland.

It is found in the secreted. Its subcellular location is the target cell membrane. Functionally, neurotoxin that triggers pain behavior and inflammation in mammals, and is paralytic and lethal to insects. Causes a time-dependent increase in cell leak current. May act by targeting membranes. This Myrmecia gulosa (Red bulldog ant) protein is U-myrmeciitoxin(01)-Mg7a.